The chain runs to 494 residues: Maintenance of mitochondrial morphology protein 1 (494 aa).

Residues 1–22 (MSSQPGDPATLPAQSSLSFTQG) are Lumenal-facing. A helical membrane pass occupies residues 23-43 (FLLGQLSVVLVLAAFIKFFIF). Residues 44 to 494 (GEAPPPPSRG…GSLPEAVTPG (451 aa)) lie on the Cytoplasmic side of the membrane. 4 disordered regions span residues 50-98 (PSRG…SSST), 274-330 (PPLD…KSNV), 398-426 (VRTGDDAETASNGPRSTVSADIGGSARHE), and 449-494 (VASR…VTPG). A compositionally biased stretch (basic residues) spans 54–64 (LSHRSATHRRS). Polar residues-rich tracts occupy residues 65–76 (NSIYSNSPQEAG) and 85–98 (STSNVLRPVPSSST). The 258-residue stretch at 130–387 (QPESLDWFNV…EPRVQVVGLP (258 aa)) folds into the SMP-LTD domain. The segment covering 274–286 (PPLDTPSHSPSPP) has biased composition (pro residues). Polar residues-rich tracts occupy residues 406 to 416 (TASNGPRSTVS) and 466 to 477 (RSMTRQESSGDL).

This sequence belongs to the MMM1 family. Homodimer. Component of the ER-mitochondria encounter structure (ERMES) or MDM complex, composed of mmm1, mdm10, mdm12 and mdm34. A mmm1 homodimer associates with one molecule of mdm12 on each side in a pairwise head-to-tail manner, and the SMP-LTD domains of mmm1 and mdm12 generate a continuous hydrophobic tunnel for phospholipid trafficking.

The protein localises to the endoplasmic reticulum membrane. Component of the ERMES/MDM complex, which serves as a molecular tether to connect the endoplasmic reticulum (ER) and mitochondria. Components of this complex are involved in the control of mitochondrial shape and protein biogenesis, and function in nonvesicular lipid trafficking between the ER and mitochondria. The mdm12-mmm1 subcomplex functions in the major beta-barrel assembly pathway that is responsible for biogenesis of all outer membrane beta-barrel proteins, and acts in a late step after the SAM complex. The mdm10-mdm12-mmm1 subcomplex further acts in the TOM40-specific pathway after the action of the mdm12-mmm1 complex. Essential for establishing and maintaining the structure of mitochondria and maintenance of mtDNA nucleoids. In Aspergillus clavatus (strain ATCC 1007 / CBS 513.65 / DSM 816 / NCTC 3887 / NRRL 1 / QM 1276 / 107), this protein is Maintenance of mitochondrial morphology protein 1.